The primary structure comprises 122 residues: Large ribosomal subunit protein uL18 (122 aa).

Positions 1-11 (MLKKPDRNALR) are enriched in basic and acidic residues. The disordered stretch occupies residues 1-22 (MLKKPDRNALRDKRRRRVRKKI). A compositionally biased stretch (basic residues) spans 12–22 (DKRRRRVRKKI).

It belongs to the universal ribosomal protein uL18 family. As to quaternary structure, part of the 50S ribosomal subunit; part of the 5S rRNA/L5/L18/L25 subcomplex. Contacts the 5S and 23S rRNAs.

Its function is as follows. This is one of the proteins that bind and probably mediate the attachment of the 5S RNA into the large ribosomal subunit, where it forms part of the central protuberance. This chain is Large ribosomal subunit protein uL18, found in Pelotomaculum thermopropionicum (strain DSM 13744 / JCM 10971 / SI).